The chain runs to 35 residues: Photosystem II reaction center protein T (35 aa).

The helical transmembrane segment at 3–23 (ALVYTFLLVSTLGIIFFAIFF) threads the bilayer.

This sequence belongs to the PsbT family. PSII is composed of 1 copy each of membrane proteins PsbA, PsbB, PsbC, PsbD, PsbE, PsbF, PsbH, PsbI, PsbJ, PsbK, PsbL, PsbM, PsbT, PsbY, PsbZ, Psb30/Ycf12, at least 3 peripheral proteins of the oxygen-evolving complex and a large number of cofactors. It forms dimeric complexes.

It is found in the plastid. The protein localises to the chloroplast thylakoid membrane. In terms of biological role, found at the monomer-monomer interface of the photosystem II (PS II) dimer, plays a role in assembly and dimerization of PSII. PSII is a light-driven water plastoquinone oxidoreductase, using light energy to abstract electrons from H(2)O, generating a proton gradient subsequently used for ATP formation. The sequence is that of Photosystem II reaction center protein T from Drimys granadensis.